A 172-amino-acid chain; its full sequence is NAD(P)H-quinone oxidoreductase subunit I, chloroplastic (172 aa).

2 consecutive 4Fe-4S ferredoxin-type domains span residues 55–84 (GRIH…VDWK) and 95–124 (LNYS…MTEE). Positions 64, 67, 70, 74, 104, 107, 110, and 114 each coordinate [4Fe-4S] cluster.

Belongs to the complex I 23 kDa subunit family. In terms of assembly, NDH is composed of at least 16 different subunits, 5 of which are encoded in the nucleus. Requires [4Fe-4S] cluster as cofactor.

Its subcellular location is the plastid. The protein localises to the chloroplast thylakoid membrane. It catalyses the reaction a plastoquinone + NADH + (n+1) H(+)(in) = a plastoquinol + NAD(+) + n H(+)(out). The enzyme catalyses a plastoquinone + NADPH + (n+1) H(+)(in) = a plastoquinol + NADP(+) + n H(+)(out). In terms of biological role, NDH shuttles electrons from NAD(P)H:plastoquinone, via FMN and iron-sulfur (Fe-S) centers, to quinones in the photosynthetic chain and possibly in a chloroplast respiratory chain. The immediate electron acceptor for the enzyme in this species is believed to be plastoquinone. Couples the redox reaction to proton translocation, and thus conserves the redox energy in a proton gradient. The protein is NAD(P)H-quinone oxidoreductase subunit I, chloroplastic of Capsella bursa-pastoris (Shepherd's purse).